The sequence spans 202 residues: Small ribosomal subunit protein uS4 (202 aa).

The S4 RNA-binding domain occupies arginine 93 to valine 155.

The protein belongs to the universal ribosomal protein uS4 family. As to quaternary structure, part of the 30S ribosomal subunit. Contacts protein S5. The interaction surface between S4 and S5 is involved in control of translational fidelity.

One of the primary rRNA binding proteins, it binds directly to 16S rRNA where it nucleates assembly of the body of the 30S subunit. In terms of biological role, with S5 and S12 plays an important role in translational accuracy. The polypeptide is Small ribosomal subunit protein uS4 (Rhodopirellula baltica (strain DSM 10527 / NCIMB 13988 / SH1)).